The primary structure comprises 279 residues: Urease accessory protein UreD (279 aa).

This sequence belongs to the UreD family. In terms of assembly, ureD, UreF and UreG form a complex that acts as a GTP-hydrolysis-dependent molecular chaperone, activating the urease apoprotein by helping to assemble the nickel containing metallocenter of UreC. The UreE protein probably delivers the nickel.

It is found in the cytoplasm. Required for maturation of urease via the functional incorporation of the urease nickel metallocenter. This chain is Urease accessory protein UreD, found in Trichodesmium erythraeum (strain IMS101).